The chain runs to 264 residues: Putative serine carboxypeptidase-like 53 (264 aa).

Residues 1–23 (MGKLQDWSITTCLFLFFLHASQT) form the signal peptide. N65, N101, N153, and N184 each carry an N-linked (GlcNAc...) asparagine glycan.

It belongs to the peptidase S10 family.

It localises to the secreted. The chain is Putative serine carboxypeptidase-like 53 (SCPL53) from Arabidopsis thaliana (Mouse-ear cress).